A 253-amino-acid polypeptide reads, in one-letter code: Vitamin B12 import ATP-binding protein BtuD (253 aa).

Positions 1-236 (MTNQLMALNQ…NTLSRVFAAD (236 aa)) constitute an ABC transporter domain. ATP is bound at residue 34 to 41 (GPNGSGKS).

It belongs to the ABC transporter superfamily. Vitamin B12 importer (TC 3.A.1.13.1) family. As to quaternary structure, the complex is composed of two ATP-binding proteins (BtuD), two transmembrane proteins (BtuC) and a solute-binding protein (BtuF).

The protein resides in the cell inner membrane. The catalysed reaction is an R-cob(III)alamin(out) + ATP + H2O = an R-cob(III)alamin(in) + ADP + phosphate + H(+). Part of the ABC transporter complex BtuCDF involved in vitamin B12 import. Responsible for energy coupling to the transport system. The protein is Vitamin B12 import ATP-binding protein BtuD of Photorhabdus laumondii subsp. laumondii (strain DSM 15139 / CIP 105565 / TT01) (Photorhabdus luminescens subsp. laumondii).